Here is an 89-residue protein sequence, read N- to C-terminus: uncharacterized protein (89 aa).

The helical transmembrane segment at 20–39 (SFAMTTYLNLFVKLLIFLYI) threads the bilayer.

Its subcellular location is the membrane. This is an uncharacterized protein from Escherichia coli (strain K12).